We begin with the raw amino-acid sequence, 739 residues long: Catalase-peroxidase 2 (739 aa).

An N-terminal signal peptide occupies residues 1–26; sequence MKKSTIPSMSALTLAMSLAFGGAAIA. Residues 105–227 constitute a cross-link (tryptophyl-tyrosyl-methioninium (Trp-Tyr) (with M-253)); sequence WHSAGVYRIF…MGATQMGLIY (123 aa). Residue His-106 is the Proton acceptor of the active site. A cross-link (tryptophyl-tyrosyl-methioninium (Tyr-Met) (with W-105)) is located at residues 227–253; it reads YVNPEGPNGVPDPLASAKEIRDTFGRM. Heme b is bound at residue His-268.

This sequence belongs to the peroxidase family. Peroxidase/catalase subfamily. Homodimer or homotetramer. Requires heme b as cofactor. Post-translationally, formation of the three residue Trp-Tyr-Met cross-link is important for the catalase, but not the peroxidase activity of the enzyme.

The catalysed reaction is H2O2 + AH2 = A + 2 H2O. It catalyses the reaction 2 H2O2 = O2 + 2 H2O. Bifunctional enzyme with both catalase and broad-spectrum peroxidase activity. The sequence is that of Catalase-peroxidase 2 from Shewanella sp. (strain ANA-3).